The following is a 556-amino-acid chain: Formate--tetrahydrofolate ligase (556 aa).

An ATP-binding site is contributed by T65–S72.

This sequence belongs to the formate--tetrahydrofolate ligase family.

The catalysed reaction is (6S)-5,6,7,8-tetrahydrofolate + formate + ATP = (6R)-10-formyltetrahydrofolate + ADP + phosphate. It functions in the pathway one-carbon metabolism; tetrahydrofolate interconversion. The polypeptide is Formate--tetrahydrofolate ligase (Streptococcus equi subsp. zooepidemicus (strain H70)).